Reading from the N-terminus, the 240-residue chain is 14-3-3 protein 3 (240 aa).

Belongs to the 14-3-3 family. In terms of assembly, interacts with coactosin. Interacts with ACTO/actophorin.

It localises to the cytoplasm. The protein resides in the cell projection. It is found in the phagocytic cup. In terms of biological role, adapter protein which is required for phagocytosis and motility, probably by regulating actin cytoskeleton dynamics. During phagocytosis, plays a role in the initiation and/or formation of the phagocytic cup and is involved in the recruitment of the actin binding protein coactosin to the phagocytic cup. The sequence is that of 14-3-3 protein 3 from Entamoeba histolytica (strain ATCC 30459 / HM-1:IMSS / ABRM).